The sequence spans 327 residues: Tryptophan--tRNA ligase (327 aa).

ATP-binding positions include 9 to 11 (QPS) and 17 to 18 (GN). The short motif at 10-18 (PSGTLTLGN) is the 'HIGH' region element. Asp-132 provides a ligand contact to L-tryptophan. Residues 144 to 146 (GDD), Ile-183, and 192 to 196 (KMSKS) each bind ATP. A 'KMSKS' region motif is present at residues 192 to 196 (KMSKS).

This sequence belongs to the class-I aminoacyl-tRNA synthetase family. As to quaternary structure, homodimer.

It is found in the cytoplasm. It carries out the reaction tRNA(Trp) + L-tryptophan + ATP = L-tryptophyl-tRNA(Trp) + AMP + diphosphate + H(+). In terms of biological role, catalyzes the attachment of tryptophan to tRNA(Trp). This chain is Tryptophan--tRNA ligase, found in Oceanobacillus iheyensis (strain DSM 14371 / CIP 107618 / JCM 11309 / KCTC 3954 / HTE831).